The chain runs to 566 residues: 5'-AMP-activated protein kinase subunit gamma-2 (566 aa).

Positions 1–198 are disordered; it reads MGSAAMDTKK…SRIYASSSPP (198 aa). Low complexity predominate over residues 15–25; that stretch reads SSPGGSSGKKN. The span at 54–64 shows a compositional bias: basic and acidic residues; sequence NSEKHSSRKVD. 9 positions are modified to phosphoserine: Ser65, Ser71, Ser73, Ser90, Ser138, Ser143, Ser158, Ser161, and Ser162. Composition is skewed to low complexity over residues 132 to 144 and 156 to 172; these read KESS…STSP and TSSV…VTKQ. Position 165 is a phosphothreonine (Thr165). Positions 180-189 are enriched in basic and acidic residues; the sequence is YKQEPERPES. The residue at position 196 (Ser196) is a Phosphoserine. 3 CBS domains span residues 272-332, 354-412, and 427-489; these read PTSS…KSPM, TFKP…MSDM, and IGTY…NLDI. ADP-binding positions include Arg299, 314-319, Val359, 380-381, and Lys399; these read MLTITD and HR. AMP-binding positions include Arg299, 314–319, Val359, His380, 380–381, Lys399, Thr429, Ala434, 455–456, 471–474, Arg498, His527, 527–528, and 543–546; these read MLTITD, HR, SA, SKFD, and SLSD. Residues Arg299, 314-319, Val359, 380-381, Arg381, and Lys399 contribute to the ATP site; these read MLTITD and HR. An AMPK pseudosubstrate motif is present at residues 367–388; sequence LFDAVYSLIKNKIHRLPVIDPI. Residues 471–474, Arg498, and 527–528 each bind ADP; these read SKFD and HR. ATP contacts are provided by residues 471-474, Arg498, and 527-528; these read SKFD and HR. The CBS 4 domain maps to 501-559; sequence YFEGVVKCSKLETLETIVDRIVRAEVHRLVVVNEADSIVGIISLSDILQALILTPAGAK.

Belongs to the 5'-AMP-activated protein kinase gamma subunit family. In terms of assembly, AMPK is a heterotrimer of an alpha catalytic subunit (PRKAA1 or PRKAA2), a beta (PRKAB1 or PRKAB2) and a gamma non-catalytic subunits (PRKAG1, PRKAG2 or PRKAG3). Interacts with FNIP1 and FNIP2. In terms of processing, phosphorylated by ULK1; leading to negatively regulate AMPK activity and suggesting the existence of a regulatory feedback loop between ULK1 and AMPK. Post-translationally, glycosylated; O-GlcNAcylated by OGT, promoting the AMP-activated protein kinase (AMPK) activity.

Its function is as follows. AMP/ATP-binding subunit of AMP-activated protein kinase (AMPK), an energy sensor protein kinase that plays a key role in regulating cellular energy metabolism. In response to reduction of intracellular ATP levels, AMPK activates energy-producing pathways and inhibits energy-consuming processes: inhibits protein, carbohydrate and lipid biosynthesis, as well as cell growth and proliferation. AMPK acts via direct phosphorylation of metabolic enzymes, and by longer-term effects via phosphorylation of transcription regulators. Also acts as a regulator of cellular polarity by remodeling the actin cytoskeleton; probably by indirectly activating myosin. Gamma non-catalytic subunit mediates binding to AMP, ADP and ATP, leading to activate or inhibit AMPK: AMP-binding results in allosteric activation of alpha catalytic subunit (PRKAA1 or PRKAA2) both by inducing phosphorylation and preventing dephosphorylation of catalytic subunits. ADP also stimulates phosphorylation, without stimulating already phosphorylated catalytic subunit. ATP promotes dephosphorylation of catalytic subunit, rendering the AMPK enzyme inactive. The chain is 5'-AMP-activated protein kinase subunit gamma-2 (Prkag2) from Mus musculus (Mouse).